The primary structure comprises 143 residues: Large ribosomal subunit protein uL13 (143 aa).

The protein belongs to the universal ribosomal protein uL13 family. As to quaternary structure, part of the 50S ribosomal subunit.

Its function is as follows. This protein is one of the early assembly proteins of the 50S ribosomal subunit, although it is not seen to bind rRNA by itself. It is important during the early stages of 50S assembly. The sequence is that of Large ribosomal subunit protein uL13 from Dichelobacter nodosus (strain VCS1703A).